A 727-amino-acid polypeptide reads, in one-letter code: Pentatricopeptide repeat-containing protein At2g33680 (727 aa).

PPR repeat units lie at residues 13–47 (HTST…GAST), 48–78 (CIQH…IICK), 79–116 (DVVS…DILP), 117–150 (NAYT…MSSF), 152–182 (DIYV…MPER), 183–213 (NTYT…FLRE), 220–254 (SDYV…GLLG), 255–285 (FVAL…SGDR), 286–320 (NSIT…GIKP), 321–355 (SEYT…GFER), 356–386 (HLFA…LQER), 387–421 (DVAL…GIIP), 422–456 (NDPT…GFGL), 457–487 (EVPI…TPNK), 488–522 (DVVS…GMEP), 523–553 (DDVT…MSDQ), and 559–593 (KVDH…HGLC). The tract at residues 594–669 (LWRILLSACK…EVGCSWIELK (76 aa)) is type E motif. The segment at 670-700 (NQYHVFVVGDTMHPMIEETKDLVCLVSRQMI) is type E(+) motif.

Belongs to the PPR family. PCMP-E subfamily.

The sequence is that of Pentatricopeptide repeat-containing protein At2g33680 (PCMP-E19) from Arabidopsis thaliana (Mouse-ear cress).